We begin with the raw amino-acid sequence, 342 residues long: Delta(6)-protoilludene synthase (342 aa).

Mg(2+) contacts are provided by D81, N217, S221, and E225. Residues 81–85 (DEYSD) carry the DDXXD motif motif. Residues R306 and Y307 each coordinate (2E,6E)-farnesyl diphosphate.

The protein belongs to the terpene synthase family. The cofactor is Mg(2+).

It catalyses the reaction (2E,6E)-farnesyl diphosphate = Delta(6)-protoilludene + diphosphate. Delta(6)-protoilludene synthase, part of the gene cluster that mediates the biosynthesis of melleolides, a range of antifungal and phytotoxic polyketide derivatives composed of an orsellinic acid (OA) moiety esterified to various sesquiterpene alcohols. The first step in melleolides biosynthesis is performed by the delta(6)-protoilludene synthase PRO1 which catalyzes the cyclization of farnesyl diphosphate to protoilludene. The orsellinic acid synthase armB produces OA by condensing acetyl-CoA with 3 malonyl-CoA units in a three-round chain elongation reaction folowed by a C2-C7 ring closure. ArmB further catalyzes the trans-esterification of OA to the various sesquiterpene alcohols resulting from the hydroxylation of protoilludene. The melleolides cluster also includes 5 cytochrome P450 monooxygenases, 4 NAD(+)-dependent oxidoreductases, one flavin-dependent oxidoreductase, and one O-methyltransferase. The cytochrome P450 monooxygenases may be involved in protoilludene hydroxylation to elaborate melleolides with multiple alcohol groups, such as melleolide D, which carries alcohol functionalities at C-4, C-5, C-10, and C-13. The role of the NAD(+)-dependent enzymes remains unknown. Numerous melleolides, including arnamial, show 5'-O-methylation of the aromatic moiety which may be catalyzed by the methyltransferase encoded in the cluster. The flavin-dependent oxidoreductase might represent the dehydrogenase yielding the aldehyde in position 1 of arnamial and other melleolides. Finally, several halogenases, localized outside of the cluster, are able to catalyze the transfer of a single chlorine atom to the melleolide backbone, resulting in a 6'-chloromelleolide product. In Armillaria ostoyae (Armillaria root rot fungus), this protein is Delta(6)-protoilludene synthase.